The sequence spans 151 residues: UPF0756 membrane protein HS_0993 (151 aa).

The next 4 membrane-spanning stretches (helical) occupy residues 1–21 (MSLQ…LGVL), 52–72 (YGVN…IVSG), 81–101 (ALIH…AWFG), and 123–143 (ILGV…AGIL).

Belongs to the UPF0756 family.

The protein localises to the cell membrane. In Histophilus somni (strain 129Pt) (Haemophilus somnus), this protein is UPF0756 membrane protein HS_0993.